Consider the following 338-residue polypeptide: Nicotinate-nucleotide--dimethylbenzimidazole phosphoribosyltransferase (338 aa).

The active-site Proton acceptor is the glutamate 305.

The protein belongs to the CobT family.

It carries out the reaction 5,6-dimethylbenzimidazole + nicotinate beta-D-ribonucleotide = alpha-ribazole 5'-phosphate + nicotinate + H(+). The protein operates within nucleoside biosynthesis; alpha-ribazole biosynthesis; alpha-ribazole from 5,6-dimethylbenzimidazole: step 1/2. Its function is as follows. Catalyzes the synthesis of alpha-ribazole-5'-phosphate from nicotinate mononucleotide (NAMN) and 5,6-dimethylbenzimidazole (DMB). The protein is Nicotinate-nucleotide--dimethylbenzimidazole phosphoribosyltransferase of Sinorhizobium medicae (strain WSM419) (Ensifer medicae).